We begin with the raw amino-acid sequence, 186 residues long: Peptidyl-tRNA hydrolase (186 aa).

Position 14 (tyrosine 14) interacts with tRNA. The active-site Proton acceptor is histidine 19. Residues tyrosine 64, asparagine 66, and asparagine 112 each coordinate tRNA.

The protein belongs to the PTH family. In terms of assembly, monomer.

The protein localises to the cytoplasm. It catalyses the reaction an N-acyl-L-alpha-aminoacyl-tRNA + H2O = an N-acyl-L-amino acid + a tRNA + H(+). Functionally, hydrolyzes ribosome-free peptidyl-tRNAs (with 1 or more amino acids incorporated), which drop off the ribosome during protein synthesis, or as a result of ribosome stalling. Its function is as follows. Catalyzes the release of premature peptidyl moieties from peptidyl-tRNA molecules trapped in stalled 50S ribosomal subunits, and thus maintains levels of free tRNAs and 50S ribosomes. The protein is Peptidyl-tRNA hydrolase of Mesoplasma florum (strain ATCC 33453 / NBRC 100688 / NCTC 11704 / L1) (Acholeplasma florum).